The sequence spans 133 residues: Large ribosomal subunit protein bL20 (133 aa).

This sequence belongs to the bacterial ribosomal protein bL20 family.

Functionally, binds directly to 23S ribosomal RNA and is necessary for the in vitro assembly process of the 50S ribosomal subunit. It is not involved in the protein synthesizing functions of that subunit. This chain is Large ribosomal subunit protein bL20, found in Chelativorans sp. (strain BNC1).